We begin with the raw amino-acid sequence, 35 residues long: Photosystem II reaction center protein Psb30 (35 aa).

The chain crosses the membrane as a helical span at residues 7–27 (VFVQLALLALIVLAGPAVILL).

This sequence belongs to the Psb30/Ycf12 family. As to quaternary structure, PSII is composed of 1 copy each of membrane proteins PsbA, PsbB, PsbC, PsbD, PsbE, PsbF, PsbH, PsbI, PsbJ, PsbK, PsbL, PsbM, PsbT, PsbX, PsbY, PsbZ, Psb30/Ycf12, peripheral proteins PsbO, CyanoQ (PsbQ), PsbU, PsbV and a large number of cofactors. It forms dimeric complexes.

The protein resides in the cellular thylakoid membrane. Functionally, a core subunit of photosystem II (PSII), probably helps stabilize the reaction center. In Synechococcus sp. (strain JA-2-3B'a(2-13)) (Cyanobacteria bacterium Yellowstone B-Prime), this protein is Photosystem II reaction center protein Psb30.